The primary structure comprises 91 residues: MIKNSFISVIPQEDKKRKRGGSVEFQVFNFTNKIRILTSHLELHRKDYSSQRGLRKILGKRQRLLAYLSKKNRVRYKELIGQLDIREPKTR.

It belongs to the universal ribosomal protein uS15 family. As to quaternary structure, part of the 30S ribosomal subunit.

Its subcellular location is the plastid. The protein resides in the chloroplast. This chain is Small ribosomal subunit protein uS15c (rps15), found in Ceratophyllum demersum (Rigid hornwort).